The following is a 283-amino-acid chain: Light-independent protochlorophyllide reductase iron-sulfur ATP-binding protein (283 aa).

ATP is bound by residues Gly-15–Thr-20 and Lys-44. Ser-19 contacts Mg(2+). [4Fe-4S] cluster-binding residues include Cys-100 and Cys-134. Asn-185–Arg-186 serves as a coordination point for ATP.

Belongs to the NifH/BchL/ChlL family. In terms of assembly, homodimer. Protochlorophyllide reductase is composed of three subunits; ChlL, ChlN and ChlB. Requires [4Fe-4S] cluster as cofactor.

It carries out the reaction chlorophyllide a + oxidized 2[4Fe-4S]-[ferredoxin] + 2 ADP + 2 phosphate = protochlorophyllide a + reduced 2[4Fe-4S]-[ferredoxin] + 2 ATP + 2 H2O. It participates in porphyrin-containing compound metabolism; chlorophyll biosynthesis (light-independent). Its function is as follows. Component of the dark-operative protochlorophyllide reductase (DPOR) that uses Mg-ATP and reduced ferredoxin to reduce ring D of protochlorophyllide (Pchlide) to form chlorophyllide a (Chlide). This reaction is light-independent. The L component serves as a unique electron donor to the NB-component of the complex, and binds Mg-ATP. In Synechococcus sp. (strain JA-3-3Ab) (Cyanobacteria bacterium Yellowstone A-Prime), this protein is Light-independent protochlorophyllide reductase iron-sulfur ATP-binding protein.